A 930-amino-acid chain; its full sequence is Translation initiation factor IF-2 (930 aa).

2 disordered regions span residues 160 to 179 (EPVE…FTDG) and 208 to 301 (AKRA…AAAP). Positions 208-227 (AKRAAEEAKRTQPRAEKPAD) are enriched in basic and acidic residues. 2 stretches are compositionally biased toward basic residues: residues 263 to 272 (GHGHKKHHHG) and 288 to 301 (KRGA…AAAP). Residues 431–600 (TRAPVVTVMG…SLQAEVLELT (170 aa)) enclose the tr-type G domain. The interval 440-447 (GHVDHGKT) is G1. 440 to 447 (GHVDHGKT) serves as a coordination point for GTP. The G2 stretch occupies residues 465–469 (GITQH). The tract at residues 486 to 489 (DTPG) is G3. Residues 486-490 (DTPGH) and 540-543 (NKCD) each bind GTP. Positions 540-543 (NKCD) are G4. The tract at residues 576-578 (SAH) is G5.

The protein belongs to the TRAFAC class translation factor GTPase superfamily. Classic translation factor GTPase family. IF-2 subfamily.

Its subcellular location is the cytoplasm. Its function is as follows. One of the essential components for the initiation of protein synthesis. Protects formylmethionyl-tRNA from spontaneous hydrolysis and promotes its binding to the 30S ribosomal subunits. Also involved in the hydrolysis of GTP during the formation of the 70S ribosomal complex. The chain is Translation initiation factor IF-2 from Cellvibrio japonicus (strain Ueda107) (Pseudomonas fluorescens subsp. cellulosa).